The primary structure comprises 398 residues: L-glutamine--4-(methylsulfanyl)-2-oxobutanoate aminotransferase (398 aa).

At Lys-240 the chain carries N6-(pyridoxal phosphate)lysine.

Belongs to the class-I pyridoxal-phosphate-dependent aminotransferase family. MtnE subfamily. It depends on pyridoxal 5'-phosphate as a cofactor.

The enzyme catalyses 4-methylsulfanyl-2-oxobutanoate + L-glutamine = 2-oxoglutaramate + L-methionine. Its pathway is amino-acid biosynthesis; L-methionine biosynthesis via salvage pathway; L-methionine from S-methyl-5-thio-alpha-D-ribose 1-phosphate: step 6/6. Involved in the methylthioribose (MTR) recycling pathway. Catalyzes the formation of methionine from 2-keto-4-methylthiobutyrate (KMTB). This Bacillus subtilis (strain 168) protein is L-glutamine--4-(methylsulfanyl)-2-oxobutanoate aminotransferase.